Consider the following 685-residue polypeptide: Probable cysteine desulfurase (685 aa).

Residues 1 to 282 (MTRSPCSTTS…RDEHEVFDVA (282 aa)) form a cargo-loading domain region. Disordered stretches follow at residues 48 to 135 (SIRP…TSAG) and 162 to 185 (PTPAGPEAPPQSAPPAPRGQVPDT). Residues 71–85 (ATAATSAGRTAAGTA) are compositionally biased toward low complexity. The segment covering 102-121 (LPPPASPAPEAPPQAAPPAP) has biased composition (pro residues). A compositionally biased stretch (low complexity) spans 122–135 (RGSAPDATAATSAG). The segment covering 164–178 (PAGPEAPPQSAPPAP) has biased composition (pro residues). The residue at position 502 (K502) is an N6-(pyridoxal phosphate)lysine. C640 serves as the catalytic Cysteine persulfide intermediate.

The protein belongs to the class-V pyridoxal-phosphate-dependent aminotransferase family. Csd subfamily. Isolated from bacteria in a complex with encapsulin 2A (AC I3NID5), strongly suggesting it is found in a type 2A encapsulin nanocompartment. There are 1-2 copies of this protein in each encapsulin shell. Pyridoxal 5'-phosphate serves as cofactor.

Its subcellular location is the encapsulin nanocompartment. It is found in the cell membrane. It catalyses the reaction (sulfur carrier)-H + L-cysteine = (sulfur carrier)-SH + L-alanine. Cargo protein of a type 2A encapsulin nanocompartment involved in sulfur metabolism. Cysteine desulfurases mobilize the sulfur from L-cysteine to yield L-alanine, an essential step in sulfur metabolism for biosynthesis of a variety of sulfur-containing biomolecules. This is Probable cysteine desulfurase from Mycolicibacterium paratuberculosis (strain ATCC BAA-968 / K-10) (Mycobacterium paratuberculosis).